We begin with the raw amino-acid sequence, 251 residues long: Methionine aminopeptidase (251 aa).

Histidine 76 is a binding site for substrate. 3 residues coordinate a divalent metal cation: aspartate 93, aspartate 104, and histidine 168. Histidine 175 contacts substrate. Residues glutamate 202 and glutamate 233 each coordinate a divalent metal cation.

The protein belongs to the peptidase M24A family. Methionine aminopeptidase type 1 subfamily. In terms of assembly, monomer. Co(2+) serves as cofactor. The cofactor is Zn(2+). Mn(2+) is required as a cofactor. Requires Fe(2+) as cofactor.

The enzyme catalyses Release of N-terminal amino acids, preferentially methionine, from peptides and arylamides.. Removes the N-terminal methionine from nascent proteins. The N-terminal methionine is often cleaved when the second residue in the primary sequence is small and uncharged (Met-Ala-, Cys, Gly, Pro, Ser, Thr, or Val). Requires deformylation of the N(alpha)-formylated initiator methionine before it can be hydrolyzed. The protein is Methionine aminopeptidase of Staphylococcus epidermidis (strain ATCC 35984 / DSM 28319 / BCRC 17069 / CCUG 31568 / BM 3577 / RP62A).